We begin with the raw amino-acid sequence, 703 residues long: Peptide transporter CstA (703 aa).

16 helical membrane passes run 6-26 (TKILWLFVAALGAICFGYLAL), 29-49 (GESVSAIYLVVAAVCIYMIGY), 87-107 (VLFGHHFAAIAGAGPLVGPIL), 118-138 (LWILVGGVLAGAVHDFVVLFI), 162-182 (VAMVAIFGIMLIIIAILAMVV), 190-210 (PWGLFTIAMTIPIAIFMGIYM), 221-241 (ASIIGFVLLILAIHYGSVIAA), 256-276 (LAIVMMAYGFIASVLPVWFLL), 282-302 (LSTFLKIGVIVVMAVAIVLVA), 319-339 (GPVFAGGVFPFLFITIACGAI), 374-394 (AVAIMALICACILHPGLYFAI), 463-483 (LMAFWYHFAILFEALFILTAV), 514-534 (GLLATALSVAGWGYFLYQGAI), 547-567 (FGVSNQMLAGMALLLATTILV), 574-594 (YTWVTLVPAVFVLVATLYGGI), and 660-680 (AILCVFFMIATLLVIISCIGI).

This sequence belongs to the peptide transporter carbon starvation (CstA) (TC 2.A.114) family.

The protein localises to the cell inner membrane. Functionally, involved in the uptake of dipeptides and tripeptides. May influence host-pathogen interactions. Involved in motility and agglutination, and has a role in stimulation of dendritic cells. In Campylobacter jejuni subsp. jejuni serotype O:2 (strain ATCC 700819 / NCTC 11168), this protein is Peptide transporter CstA.